We begin with the raw amino-acid sequence, 621 residues long: (-)-beta-phellandrene synthase 1, chloroplastic (621 aa).

A chloroplast-targeting transit peptide spans 1-49; that stretch reads MALALVSVAPLVSMRRSLFSSPYELKSIDKTIPNLVMCRKRMSGTPSIR. Positions 372, 376, and 524 each coordinate Mg(2+). The short motif at 372 to 376 is the DDXXD motif element; it reads DDIYD.

It belongs to the terpene synthase family. Tpsd subfamily. The cofactor is Mg(2+). Requires Mn(2+) as cofactor.

The protein resides in the plastid. It is found in the chloroplast. It catalyses the reaction (2E)-geranyl diphosphate = (-)-beta-phellandrene + diphosphate. It participates in terpene metabolism; oleoresin biosynthesis. Its pathway is secondary metabolite biosynthesis; terpenoid biosynthesis. Monoterpene synthase (TPS) involved in the biosynthesis of monoterpene natural products included in conifer oleoresin secretions and volatile emissions; these compounds contribute to biotic and abiotic stress defense against herbivores and pathogens. Catalyzes the conversion of (2E)-geranyl diphosphate (GPP) to (-)-beta-phellandrene and, to a lower extent, to (-)-alpha-phellandrene. The protein is (-)-beta-phellandrene synthase 1, chloroplastic of Pinus contorta (Shore pine).